The following is a 697-amino-acid chain: Elongation factor G (697 aa).

Residues 8–282 (ENTRNIGIMA…AIVDYMPSPV (275 aa)) form the tr-type G domain. GTP is bound by residues 17–24 (AHIDAGKT), 81–85 (DTPGH), and 135–138 (NKMD).

It belongs to the TRAFAC class translation factor GTPase superfamily. Classic translation factor GTPase family. EF-G/EF-2 subfamily.

Its subcellular location is the cytoplasm. In terms of biological role, catalyzes the GTP-dependent ribosomal translocation step during translation elongation. During this step, the ribosome changes from the pre-translocational (PRE) to the post-translocational (POST) state as the newly formed A-site-bound peptidyl-tRNA and P-site-bound deacylated tRNA move to the P and E sites, respectively. Catalyzes the coordinated movement of the two tRNA molecules, the mRNA and conformational changes in the ribosome. In Acetivibrio thermocellus (strain ATCC 27405 / DSM 1237 / JCM 9322 / NBRC 103400 / NCIMB 10682 / NRRL B-4536 / VPI 7372) (Clostridium thermocellum), this protein is Elongation factor G.